A 612-amino-acid chain; its full sequence is Glutamine--fructose-6-phosphate aminotransferase [isomerizing] (612 aa).

The Nucleophile; for GATase activity role is filled by C2. Positions 2-220 constitute a Glutamine amidotransferase type-2 domain; that stretch reads CGIVGAIRAH…DGDIALLASD (219 aa). SIS domains are found at residues 288–428 and 461–602; these read AKSV…VRGL and WAQQ…VDKP. K607 functions as the For Fru-6P isomerization activity in the catalytic mechanism.

Homodimer.

Its subcellular location is the cytoplasm. It carries out the reaction D-fructose 6-phosphate + L-glutamine = D-glucosamine 6-phosphate + L-glutamate. Functionally, catalyzes the first step in hexosamine metabolism, converting fructose-6P into glucosamine-6P using glutamine as a nitrogen source. This Neisseria meningitidis serogroup A / serotype 4A (strain DSM 15465 / Z2491) protein is Glutamine--fructose-6-phosphate aminotransferase [isomerizing].